The chain runs to 787 residues: Lysine-specific demethylase JMJ13 (787 aa).

The region spanning 103–144 (CPVYRPTKEEFEDPLTYLQKIFPEASKYGICKIVSPLTATVP) is the JmjN domain. The region spanning 250 to 420 (SSKWNLNKVS…FGAIASCRYA (171 aa)) is the JmjC domain. Fe cation is bound by residues His-293, Glu-295, and His-388. Zn(2+)-binding residues include Cys-500, Cys-503, Cys-514, Cys-516, His-519, Cys-522, His-525, and Cys-534. A C4HCHC zinc finger spans residues 500-551 (CSLCKRDCYLAFINCECYSHPVCLRHDVKKLDLPCGTTHTLYLRDNIEDMEA). The C5HC2 zinc-finger motif lies at 500-551 (CSLCKRDCYLAFINCECYSHPVCLRHDVKKLDLPCGTTHTLYLRDNIEDMEA). The FYR N-terminal domain occupies 617–675 (VMSYEANASCISSVADDYECSDYVNRRANCSSSSDSKLSEEVACSSSKKTRFFPVVQDE). An FYR C-terminal domain is found at 677–756 (LVADQESDGS…ELVISNRKET (80 aa)). Residues 712-769 (ESDHHQELKRLKKSHHHEGRYSSSSSVSRQEEEEDELVISNRKETQQQSDVKMQKKRI) form a disordered region. The Nuclear localization signal motif lies at 752–759 (NRKETQQQ).

Belongs to the JARID1 histone demethylase family. The cofactor is Fe(2+). As to expression, mostly expressed in leaves, and, to a lower extent, in inflorescences, roots, siliques and stems.

Its subcellular location is the nucleus. It catalyses the reaction N(6),N(6),N(6)-trimethyl-L-lysyl(27)-[histone H3] + 2-oxoglutarate + O2 = N(6),N(6)-dimethyl-L-lysyl(27)-[histone H3] + formaldehyde + succinate + CO2. Histone demethylase that demethylates 'Lys-27' (H3K27me) of histone H3 with a specific activity for H3K27me3 and involved in the regulation of gene expression. Acts as a temperature and photoperiod dependent flowering repressor. The protein is Lysine-specific demethylase JMJ13 of Arabidopsis thaliana (Mouse-ear cress).